A 501-amino-acid chain; its full sequence is Proline--tRNA ligase (501 aa).

This sequence belongs to the class-II aminoacyl-tRNA synthetase family. ProS type 3 subfamily. As to quaternary structure, homodimer.

The protein localises to the cytoplasm. The enzyme catalyses tRNA(Pro) + L-proline + ATP = L-prolyl-tRNA(Pro) + AMP + diphosphate. In terms of biological role, catalyzes the attachment of proline to tRNA(Pro) in a two-step reaction: proline is first activated by ATP to form Pro-AMP and then transferred to the acceptor end of tRNA(Pro). The sequence is that of Proline--tRNA ligase from Halobacterium salinarum (strain ATCC 29341 / DSM 671 / R1).